The following is a 101-amino-acid chain: Ferredoxin Fdx2 (101 aa).

4Fe-4S ferredoxin-type domains lie at 1 to 29 (MATY…EGDE) and 31 to 64 (YVID…PNPQ). Positions 9, 12, 15, 19, 38, 41, 50, and 54 each coordinate [4Fe-4S] cluster.

[4Fe-4S] cluster serves as cofactor.

Its function is as follows. Ferredoxins are iron-sulfur proteins that transfer electrons in a wide variety of metabolic reactions. Fdx2 can receive electrons from both FdR_A and FdR_B ferredoxin reductases, with a preference for FdR_B compared with FdR_A, and transfer the electrons to the cytochrome P450 CYP260A1. The sequence is that of Ferredoxin Fdx2 from Sorangium cellulosum (strain So ce56) (Polyangium cellulosum (strain So ce56)).